Consider the following 362-residue polypeptide: Chorismate synthase (362 aa).

Positions 39 to 59 (ADLQGDLDRRKPGTSRYTTPR) are disordered. Arginine 48 and arginine 54 together coordinate NADP(+). Residues 125–127 (RSS), 238–239 (NA), glycine 278, 293–297 (KPTSS), and arginine 319 each bind FMN.

The protein belongs to the chorismate synthase family. Homotetramer. Requires FMNH2 as cofactor.

The catalysed reaction is 5-O-(1-carboxyvinyl)-3-phosphoshikimate = chorismate + phosphate. Its pathway is metabolic intermediate biosynthesis; chorismate biosynthesis; chorismate from D-erythrose 4-phosphate and phosphoenolpyruvate: step 7/7. In terms of biological role, catalyzes the anti-1,4-elimination of the C-3 phosphate and the C-6 proR hydrogen from 5-enolpyruvylshikimate-3-phosphate (EPSP) to yield chorismate, which is the branch point compound that serves as the starting substrate for the three terminal pathways of aromatic amino acid biosynthesis. This reaction introduces a second double bond into the aromatic ring system. The sequence is that of Chorismate synthase from Aeromonas hydrophila subsp. hydrophila (strain ATCC 7966 / DSM 30187 / BCRC 13018 / CCUG 14551 / JCM 1027 / KCTC 2358 / NCIMB 9240 / NCTC 8049).